Here is a 412-residue protein sequence, read N- to C-terminus: MKFLDQAKIFVKSGDGGAGCCSFRREKHIEFGGPDGGDGGRGGDVILECVANLNTLIDYRYQQHFKAKIGNHGQGRNKTGGKGDDVILKVPVGTQVLDEEKETVLADLTSAGQTMVLLRGGDGGFGNMHYKSSTNQAPRRADEGWPGEERWIWLRLKMIADAGLVGLPNAGKSTFLAAVTRARPKIADYPFTTLHPNLGVVTLGEEEFVIADIPGLIEGAHEGAGIGDRFLGHIERCRVLLHLIDGTQDDVAEAYRVVRHELAAYGGGLDEKPEVVALNKCDSLTADDIELKLMELSEACGQEVLPLSGVSGVGLKPILARLFTHIREAREAEPAVPAASPIFGSSKRGAPTFQQRKRKLQAEDDEFAGGHWGADGEWIWHSADNDGDEVDEDYDDEDLEEVADDEEDDAEE.

Residues 1 to 159 enclose the Obg domain; it reads MKFLDQAKIF…RWIWLRLKMI (159 aa). The OBG-type G domain occupies 160–327; it reads ADAGLVGLPN…ILARLFTHIR (168 aa). GTP contacts are provided by residues 166 to 173, 191 to 195, 212 to 215, 279 to 282, and 308 to 310; these read GLPNAGKS, FTTLH, DIPG, NKCD, and SGV. Mg(2+) contacts are provided by serine 173 and threonine 193. Residues 335-412 form a disordered region; it reads AVPAASPIFG…ADDEEDDAEE (78 aa). A compositionally biased stretch (acidic residues) spans 385-412; that stretch reads NDGDEVDEDYDDEDLEEVADDEEDDAEE.

The protein belongs to the TRAFAC class OBG-HflX-like GTPase superfamily. OBG GTPase family. In terms of assembly, monomer. Requires Mg(2+) as cofactor.

The protein resides in the cytoplasm. Functionally, an essential GTPase which binds GTP, GDP and possibly (p)ppGpp with moderate affinity, with high nucleotide exchange rates and a fairly low GTP hydrolysis rate. Plays a role in control of the cell cycle, stress response, ribosome biogenesis and in those bacteria that undergo differentiation, in morphogenesis control. This Paramagnetospirillum magneticum (strain ATCC 700264 / AMB-1) (Magnetospirillum magneticum) protein is GTPase Obg.